The sequence spans 172 residues: RNA pyrophosphohydrolase (172 aa).

The region spanning 6–149 (GYRPNVGIIL…KRDVYRMALK (144 aa)) is the Nudix hydrolase domain. Positions 38–59 (GGIKYGESPEQAMYRELMEEVG) match the Nudix box motif.

This sequence belongs to the Nudix hydrolase family. RppH subfamily. Requires a divalent metal cation as cofactor.

Accelerates the degradation of transcripts by removing pyrophosphate from the 5'-end of triphosphorylated RNA, leading to a more labile monophosphorylated state that can stimulate subsequent ribonuclease cleavage. This is RNA pyrophosphohydrolase from Methylobacillus flagellatus (strain ATCC 51484 / DSM 6875 / VKM B-1610 / KT).